The primary structure comprises 869 residues: Dimethylglycine dehydrogenase, mitochondrial (869 aa).

Residues 1–43 (MLRPGALRLRGLALRGSPRRPSSAGLREGQESPASPPEWKDRA) constitute a mitochondrion transit peptide. The tract at residues 14–39 (LRGSPRRPSSAGLREGQESPASPPEW) is disordered. Residues 52 to 53 (CV), 73 to 74 (EK), and 80 to 88 (GSTWHAAGL) each bind FAD. Tele-8alpha-FAD histidine is present on His84. Lys107 carries the N6-acetyllysine modification. Lys141 bears the N6-acetyllysine; alternate mark. Lys141 bears the N6-succinyllysine; alternate mark. N6-acetyllysine is present on Lys161. Residue Val212 participates in FAD binding. N6-acetyllysine is present on Lys216. An FAD-binding site is contributed by Trp244. 2 positions are modified to N6-succinyllysine: Lys310 and Lys312. 2 positions are modified to N6-acetyllysine: Lys328 and Lys353. Position 390-395 (390-395 (FGYGII)) interacts with FAD. N6-acetyllysine; alternate is present on residues Lys427, Lys469, and Lys516. Lys427, Lys469, and Lys516 each carry N6-succinyllysine; alternate. A (6S)-5,6,7,8-tetrahydrofolate-binding site is contributed by 573–575 (ELT). At Lys648 the chain carries N6-acetyllysine; alternate. An N6-succinyllysine; alternate modification is found at Lys648. (6S)-5,6,7,8-tetrahydrofolate contacts are provided by residues Tyr669, 676-678 (ELY), and Tyr737. Lys757 is subject to N6-acetyllysine. Position 786 is an N6-acetyllysine; alternate (Lys786). Residue Lys786 is modified to N6-succinyllysine; alternate. Lys788 is modified (N6-succinyllysine).

This sequence belongs to the GcvT family. FAD serves as cofactor.

It localises to the mitochondrion. The enzyme catalyses (6S)-5,6,7,8-tetrahydrofolyl-(gamma-L-Glu)(n) + N,N-dimethylglycine + oxidized [electron-transfer flavoprotein] + H(+) = (6R)-5,10-methylenetetrahydrofolyl-(gamma-L-Glu)(n) + sarcosine + reduced [electron-transfer flavoprotein]. The protein operates within amine and polyamine degradation; betaine degradation; sarcosine from betaine: step 2/2. Functionally, catalyzes the demethylation of N,N-dimethylglycine to sarcosine. Also has activity with sarcosine in vitro. This chain is Dimethylglycine dehydrogenase, mitochondrial (Dmgdh), found in Mus musculus (Mouse).